The sequence spans 655 residues: Carboxypeptidase S1 homolog B (655 aa).

The first 21 residues, 1–21 (MRPFARAALCLLAAAGHLAQA), serve as a signal peptide directing secretion. A disulfide bond links Cys51 and Cys123. 3 N-linked (GlcNAc...) asparagine glycosylation sites follow: Asn130, Asn163, and Asn186. Ser240 is an active-site residue. Residues Asn266, Asn302, and Asn311 are each glycosylated (N-linked (GlcNAc...) asparagine). Disulfide bonds link Cys328/Cys364 and Cys335/Cys357. Asn414 carries an N-linked (GlcNAc...) asparagine glycan. Asp459 is an active-site residue. Cys462 provides a ligand contact to substrate. Residues Asn475, Asn493, and Asn506 are each glycosylated (N-linked (GlcNAc...) asparagine). His517 is a catalytic residue. Residue Glu518 coordinates substrate. Residues Asn598 and Asn612 are each glycosylated (N-linked (GlcNAc...) asparagine). The GPI-anchor amidated glycine moiety is linked to residue Gly631. A propeptide spans 632 to 655 (AALVSGRIKFHVHVIKSFDYYIFI) (removed in mature form).

The protein belongs to the peptidase S10 family.

It localises to the cell membrane. The enzyme catalyses Preferential release of a C-terminal arginine or lysine residue.. In terms of biological role, extracellular serine carboxypeptidase that contributes to pathogenicity. This is Carboxypeptidase S1 homolog B (SCPB) from Arthroderma otae (strain ATCC MYA-4605 / CBS 113480) (Microsporum canis).